The following is a 268-amino-acid chain: Hemolysin C (268 aa).

2 CBS domains span residues 52–111 (MVPR…NFSL) and 114–171 (ILHK…IRDE).

It belongs to the UPF0053 family.

Bacterial hemolysins are exotoxins that attack blood cell membranes and cause cell rupture by mechanisms not clearly defined. The protein is Hemolysin C (tlyC) of Brachyspira hyodysenteriae (Treponema hyodysenteriae).